The sequence spans 129 residues: uncharacterized protein (129 aa).

A helical transmembrane segment spans residues 46–66 (FFHFFFSFLLHLISPAVTGGI).

The protein resides in the membrane. This is an uncharacterized protein from Saccharomyces cerevisiae (strain ATCC 204508 / S288c) (Baker's yeast).